The chain runs to 620 residues: Chaperone protein HscA homolog (620 aa).

Belongs to the heat shock protein 70 family.

In terms of biological role, chaperone involved in the maturation of iron-sulfur cluster-containing proteins. Has a low intrinsic ATPase activity which is markedly stimulated by HscB. This chain is Chaperone protein HscA homolog, found in Pseudomonas fluorescens (strain ATCC BAA-477 / NRRL B-23932 / Pf-5).